A 133-amino-acid chain; its full sequence is Small ribosomal subunit protein uS8 (133 aa).

This sequence belongs to the universal ribosomal protein uS8 family. Part of the 30S ribosomal subunit. Contacts proteins S5 and S12.

One of the primary rRNA binding proteins, it binds directly to 16S rRNA central domain where it helps coordinate assembly of the platform of the 30S subunit. This is Small ribosomal subunit protein uS8 from Prochlorococcus marinus (strain MIT 9215).